The sequence spans 411 residues: Heparan-sulfate 6-O-sulfotransferase 1 (411 aa).

The Cytoplasmic portion of the chain corresponds to 1–19; it reads MRRRRAGGRTMVERASKFV. Residues 20 to 37 traverse the membrane as a helical; Signal-anchor for type II membrane protein segment; that stretch reads LVVAGSACFMLILYQYAG. Residues 38-411 are Lumenal-facing; sequence PGLSLGAPGG…DYMSHIIEKW (374 aa). 93 to 101 lines the 3'-phosphoadenylyl sulfate pocket; it reads HIQKTGGTT. Substrate is bound by residues 123–124, arginine 140, tryptophan 145, and histidine 150; that span reads KK. The active-site Proton acceptor is the histidine 150. The 3'-phosphoadenylyl sulfate site is built by arginine 185 and serine 193. Residues histidine 197 and tryptophan 204 each contribute to the substrate site. N-linked (GlcNAc...) asparagine glycosylation is present at asparagine 264. 317–319 contributes to the 3'-phosphoadenylyl sulfate binding site; that stretch reads MQY. Asparagine 320 carries an N-linked (GlcNAc...) asparagine glycan. 323 to 324 contacts 3'-phosphoadenylyl sulfate; that stretch reads RA. The stretch at 352-386 forms a coiled coil; sequence KDLFQQRYQYKRQLERREQRLRNREERLLHRSKEA. The interval 380 to 401 is disordered; the sequence is LHRSKEALPREDPEEPGRVPTE.

This sequence belongs to the sulfotransferase 6 family. Post-translationally, N-glycosylated. As to expression, expressed in fetal brain and liver.

It is found in the membrane. It carries out the reaction alpha-D-glucosaminyl-[heparan sulfate](n) + 3'-phosphoadenylyl sulfate = 6-sulfo-alpha-D-glucosaminyl-[heparan sulfate](n) + adenosine 3',5'-bisphosphate + H(+). Its function is as follows. 6-O-sulfation enzyme which catalyzes the transfer of sulfate from 3'-phosphoadenosine 5'-phosphosulfate (PAPS) to position 6 of the N-sulfoglucosamine residue (GlcNS) of heparan sulfate. Critical for normal neuronal development where it may play a role in neuron branching. May also play a role in limb development. May prefer iduronic acid. This is Heparan-sulfate 6-O-sulfotransferase 1 from Mus musculus (Mouse).